The following is a 167-amino-acid chain: NAD(P)H-quinone oxidoreductase subunit I, chloroplastic (167 aa).

4Fe-4S ferredoxin-type domains are found at residues 55–84 (GRIHFEFDKCIACEVCVRVCPIDLPVVDWK) and 95–124 (LNYSIDFGICIFCGNCVEYCPTNCLSMTEE). [4Fe-4S] cluster contacts are provided by Cys64, Cys67, Cys70, Cys74, Cys104, Cys107, Cys110, and Cys114.

Belongs to the complex I 23 kDa subunit family. As to quaternary structure, NDH is composed of at least 16 different subunits, 5 of which are encoded in the nucleus. [4Fe-4S] cluster is required as a cofactor.

The protein localises to the plastid. The protein resides in the chloroplast thylakoid membrane. It catalyses the reaction a plastoquinone + NADH + (n+1) H(+)(in) = a plastoquinol + NAD(+) + n H(+)(out). The catalysed reaction is a plastoquinone + NADPH + (n+1) H(+)(in) = a plastoquinol + NADP(+) + n H(+)(out). Functionally, NDH shuttles electrons from NAD(P)H:plastoquinone, via FMN and iron-sulfur (Fe-S) centers, to quinones in the photosynthetic chain and possibly in a chloroplast respiratory chain. The immediate electron acceptor for the enzyme in this species is believed to be plastoquinone. Couples the redox reaction to proton translocation, and thus conserves the redox energy in a proton gradient. The polypeptide is NAD(P)H-quinone oxidoreductase subunit I, chloroplastic (Panax ginseng (Korean ginseng)).